The following is a 262-amino-acid chain: Ornithine carbamoyltransferase (262 aa).

Carbamoyl phosphate-binding positions include 3–7, Gln-30, Arg-54, and 81–84; these read STRTR and HPTQ. L-ornithine contacts are provided by residues Asn-114, Asp-178, and 182–183; that span reads SM. Carbamoyl phosphate is bound by residues 219-222 and Thr-247; that span reads HCLP.

The protein belongs to the aspartate/ornithine carbamoyltransferase superfamily. OTCase family.

It is found in the cytoplasm. The catalysed reaction is carbamoyl phosphate + L-ornithine = L-citrulline + phosphate + H(+). The protein operates within amino-acid biosynthesis; L-arginine biosynthesis; L-arginine from L-ornithine and carbamoyl phosphate: step 1/3. It participates in amino-acid degradation; L-arginine degradation via ADI pathway; carbamoyl phosphate from L-arginine: step 2/2. Functionally, reversibly catalyzes the transfer of the carbamoyl group from carbamoyl phosphate (CP) to the N(epsilon) atom of ornithine (ORN) to produce L-citrulline. The sequence is that of Ornithine carbamoyltransferase (argF) from Neisseria meningitidis.